The following is a 139-amino-acid chain: Putative esterase PM0788 (139 aa).

The protein belongs to the thioesterase PaaI family.

The polypeptide is Putative esterase PM0788 (Pasteurella multocida (strain Pm70)).